The chain runs to 148 residues: U5-hexatoxin-Hi1a (148 aa).

An N-terminal signal peptide occupies residues 1-21; sequence MNFSVVAVALVVVLTVHFTDG. Positions 22-38 are excised as a propeptide; the sequence is QETSSSLPSPPSPLPGR. A disordered region spans residues 125-148; sequence TPSTTVTTPTPTTETPTTETPSTP.

In terms of processing, contains 2 disulfide bonds. Expressed by the venom gland.

The protein localises to the secreted. Functionally, probable ion channel inhibitor. The chain is U5-hexatoxin-Hi1a from Hadronyche infensa (Fraser island funnel-web spider).